The sequence spans 160 residues: Cytochrome b6-f complex subunit 4 (160 aa).

Helical transmembrane passes span 36-56, 95-115, and 131-151; these read LLYI…GLAV, LLGV…PFLE, and TVFL…TLPI.

The protein belongs to the cytochrome b family. PetD subfamily. As to quaternary structure, the 4 large subunits of the cytochrome b6-f complex are cytochrome b6, subunit IV (17 kDa polypeptide, petD), cytochrome f and the Rieske protein, while the 4 small subunits are petG, petL, petM and petN. The complex functions as a dimer.

The protein resides in the plastid. Its subcellular location is the chloroplast thylakoid membrane. Functionally, component of the cytochrome b6-f complex, which mediates electron transfer between photosystem II (PSII) and photosystem I (PSI), cyclic electron flow around PSI, and state transitions. The sequence is that of Cytochrome b6-f complex subunit 4 from Saccharum hybrid (Sugarcane).